The primary structure comprises 390 residues: 3,5-dihydroxyphenylacetyl-CoA synthase (390 aa).

Cysteine 173 is a catalytic residue.

It belongs to the thiolase-like superfamily. Chalcone/stilbene synthases family.

It catalyses the reaction 4 malonyl-CoA + 4 H(+) = (3,5-dihydroxyphenyl)acetyl-CoA + 4 CO2 + 3 CoA + H2O. The protein operates within antibiotic biosynthesis; vancomycin biosynthesis. Involved in the biosynthesis of the nonproteinogenic amino acid monomer (S)-3,5-dihydroxyphenylglycine (Dpg) responsible of the production of vancomycin and teicoplanin antibiotics. Catalyzes the Claisen condensation of four molecules of malonyl-CoA to yield 3,5-dihydroxyphenylacetyl-CoA (DPA-CoA) and three free coenzyme A (CoA). DpgA requires the presence of the dehydratases DpgB and DpgD to facilitate the aromatization of the DPA-S-DgpA or DPA-S-CoA intermediate. This chain is 3,5-dihydroxyphenylacetyl-CoA synthase, found in Streptomyces toyocaensis.